The primary structure comprises 342 residues: MADSCCPENPTAVPTVPTISTCSNGGSIRNAIRLPSSCRCRTWQLVTHQENRQGPDSVPVSSEPVSCPSTCFPETPCVGFICQPIGSHMACCASDTGGSPHPAASCQPSCLESAGCHTMCYENSSCHQSSGQGSACTSGSCQTACGPSASCDDRSCQPSCSEATSYAETPCLPAGCEAGSCQPTSCQGGSHQPTRGEGQLCQSVYYQPICYVLKSCQSTPCMSVSCQPLTCMCFCSQTCCVPPTCQPLHCQTTPIISFICQPVAPCQSPCFLKSSSKSASCVMISGQQICGGPTPDQSGCQSPSCHPPCCVTGLGQPSSSGPGCCPPTSPDICQAGTYGPTS.

Tandem repeats lie at residues 5–9 (CCPEN), 91–95 (CCASD), 239–243 (CCVPP), 309–313 (CCVTG), and 324–328 (CCPPT). The interval 5–328 (CCPENPTAVP…SSGPGCCPPT (324 aa)) is 5 X 5 AA repeats of C-C-X(3).

The protein belongs to the KRTAP type 10 family.

This chain is Keratin-associated protein 29-1 (Krtap29-1), found in Mus musculus (Mouse).